Here is a 141-residue protein sequence, read N- to C-terminus: Large ribosomal subunit protein uL11 (141 aa).

The protein belongs to the universal ribosomal protein uL11 family. Part of the ribosomal stalk of the 50S ribosomal subunit. Interacts with L10 and the large rRNA to form the base of the stalk. L10 forms an elongated spine to which L12 dimers bind in a sequential fashion forming a multimeric L10(L12)X complex. Post-translationally, one or more lysine residues are methylated.

Its function is as follows. Forms part of the ribosomal stalk which helps the ribosome interact with GTP-bound translation factors. This Synechococcus sp. (strain WH7803) protein is Large ribosomal subunit protein uL11.